Here is a 317-residue protein sequence, read N- to C-terminus: Ribosomal protein L11 methyltransferase (317 aa).

S-adenosyl-L-methionine contacts are provided by threonine 158, glycine 179, aspartate 201, and asparagine 244.

The protein belongs to the methyltransferase superfamily. PrmA family.

The protein localises to the cytoplasm. It carries out the reaction L-lysyl-[protein] + 3 S-adenosyl-L-methionine = N(6),N(6),N(6)-trimethyl-L-lysyl-[protein] + 3 S-adenosyl-L-homocysteine + 3 H(+). Functionally, methylates ribosomal protein L11. The chain is Ribosomal protein L11 methyltransferase from Streptococcus mutans serotype c (strain ATCC 700610 / UA159).